A 177-amino-acid chain; its full sequence is Large ribosomal subunit protein uL6 (177 aa).

This sequence belongs to the universal ribosomal protein uL6 family. Part of the 50S ribosomal subunit.

This protein binds to the 23S rRNA, and is important in its secondary structure. It is located near the subunit interface in the base of the L7/L12 stalk, and near the tRNA binding site of the peptidyltransferase center. This chain is Large ribosomal subunit protein uL6, found in Cupriavidus necator (strain ATCC 17699 / DSM 428 / KCTC 22496 / NCIMB 10442 / H16 / Stanier 337) (Ralstonia eutropha).